We begin with the raw amino-acid sequence, 250 residues long: Envelope glycoprotein L (250 aa).

The signal sequence occupies residues 1 to 18 (MELLLFVMSLILLTFSKA). Residues 31-239 (KLDDCIAAVI…ETYNSKLPFR (209 aa)) form the gL betaherpesvirus-type domain. A disulfide bridge links Cys-136 with Cys-141.

It belongs to the herpesviridae glycoprotein L (gL) family. Betaherpesvirinae gL subfamily. Interacts with glycoprotein H (gH); this interaction is necessary for the correct processing and cell surface expression of gH. Part of a gH-gL-gO complex.

The protein resides in the virion membrane. The protein localises to the host cell membrane. It localises to the host Golgi apparatus. Its subcellular location is the host trans-Golgi network. In terms of biological role, the heterodimer glycoprotein H-glycoprotein L is required for the fusion of viral and plasma membranes leading to virus entry into the host cell. Acts as a functional inhibitor of gH and maintains gH in an inhibited form. Upon binding to host integrins, gL dissociates from gH leading to activation of the viral fusion glycoproteins gB and gH. The protein is Envelope glycoprotein L of Human herpesvirus 6A (strain Uganda-1102) (HHV-6 variant A).